We begin with the raw amino-acid sequence, 478 residues long: Solute carrier family 7 member 13 (478 aa).

Over 1-14 (MAMDSKKEIRLKRE) the chain is Cytoplasmic. The helical transmembrane segment at 15–35 (LGYFWGTNFLIINIIGAGIFV) threads the bilayer. Residues 36 to 47 (SPKGVLQHSSMN) lie on the Extracellular side of the membrane. The helical transmembrane segment at 48 to 68 (VGVSLCVWAVCAVLTLTSALC) threads the bilayer. Topologically, residues 69–89 (SAEIGITFPYSGAHYYFLKRC) are cytoplasmic. A helical membrane pass occupies residues 90-110 (FGPLVAFLRLWTSLFLGPGLI). The Extracellular segment spans residues 111-129 (ASQALLLAEYGVQPFYPSC). Residues 130–150 (SAPILPRKCLALAMLWIVGIL) form a helical membrane-spanning segment. Topologically, residues 151–163 (NSRGVKELSWLQT) are cytoplasmic. Residues 164 to 184 (VSSVLKVGILGVISLSGLFLL) form a helical membrane-spanning segment. The Extracellular segment spans residues 185–208 (VRGKKENVQRLQNAFDAEFPEVSQ). The helical transmembrane segment at 209–229 (LIEAIFQGYFAFSGGGCFTCI) threads the bilayer. Topologically, residues 230 to 242 (AGELKKPSKTIPR) are cytoplasmic. A helical membrane pass occupies residues 243-263 (CIFTGLPLVTVVYLLANISYL). The Extracellular portion of the chain corresponds to 264 to 288 (TVLTPQEMLSSDAVALTWTDRVIPQ). The chain crosses the membrane as a helical span at residues 289 to 309 (FTWTVPFAISASLFINLVINV). Over 310 to 338 (LETSRVLYIASENGQLPLLFCALNVHSSP) the chain is Cytoplasmic. Residues 339–359 (FIAVLLIISMASILIVLTNLI) form a helical membrane-spanning segment. Position 360 (D360) is a topological domain, extracellular. Residues 361 to 381 (LINYLYFVVSIWTALSIIGIL) form a helical membrane-spanning segment. The Cytoplasmic portion of the chain corresponds to 382–395 (KLRYQEPNLHRPYK). The chain crosses the membrane as a helical span at residues 396-416 (VFLPFTFIALGITLSLVLIPL). Over 417–423 (VKSPKLH) the chain is Extracellular. A helical transmembrane segment spans residues 424-444 (YIYVFLFLLSGLVFYVPLIHF). Residues 445-478 (KVKFVWFQKLTCYLQLLFNICIPDVSDDHIHEES) lie on the Cytoplasmic side of the membrane.

This sequence belongs to the amino acid-polyamine-organocation (APC) superfamily. Disulfide-linked heterodimer composed of the catalytic light subunit SLC7A13 and the heavy subunit SLC3A1. In terms of tissue distribution, expressed in renal tubules in the outer stripe of the outer medulla and medullary ray (at protein level). Detected in male but not in female kidney.

It is found in the apical cell membrane. The enzyme catalyses L-cystine(out) + L-aspartate(in) = L-cystine(in) + L-aspartate(out). It catalyses the reaction L-cystine(out) = L-cystine(in). It carries out the reaction L-aspartate(in) + L-glutamate(out) = L-aspartate(out) + L-glutamate(in). The catalysed reaction is L-aspartate(in) + L-glutamine(out) = L-aspartate(out) + L-glutamine(in). The enzyme catalyses L-aspartate(in) + L-methionine(out) = L-aspartate(out) + L-methionine(in). It catalyses the reaction L-leucine(out) + L-aspartate(in) = L-leucine(in) + L-aspartate(out). It carries out the reaction L-valine(out) + L-aspartate(in) = L-valine(in) + L-aspartate(out). The catalysed reaction is L-aspartate(in) + L-phenylalanine(out) = L-aspartate(out) + L-phenylalanine(in). The enzyme catalyses L-tyrosine(out) + L-aspartate(in) = L-tyrosine(in) + L-aspartate(out). It catalyses the reaction L-tryptophan(out) + L-aspartate(in) = L-tryptophan(in) + L-aspartate(out). Associates with SLC3A1/rBAT to form a functional heterodimeric complex that transports anionic and neutral amino acids across the apical plasma membrane of renal epithelium. Preferentially mediates exchange transport, but can also operate via facilitated diffusion. May act as a major transporter for L-cystine in late proximal tubules, ensuring its reabsorption from the luminal fluid in exchange for cytosolic L-glutamate or L-aspartate. In Mus musculus (Mouse), this protein is Solute carrier family 7 member 13.